Consider the following 440-residue polypeptide: tRNA-2-methylthio-N(6)-dimethylallyladenosine synthase (440 aa).

Residues 3–119 (KKFFIKTFGC…LPELINQAQA (117 aa)) enclose the MTTase N-terminal domain. [4Fe-4S] cluster is bound by residues Cys-12, Cys-48, Cys-82, Cys-158, Cys-162, and Cys-165. Residues 144-374 (RDNKYCAYVT…LELQKSILSE (231 aa)) form the Radical SAM core domain. Positions 377–437 (KKYEGTVQEV…PFSLEGELLE (61 aa)) constitute a TRAM domain.

This sequence belongs to the methylthiotransferase family. MiaB subfamily. As to quaternary structure, monomer. [4Fe-4S] cluster is required as a cofactor.

It localises to the cytoplasm. The enzyme catalyses N(6)-dimethylallyladenosine(37) in tRNA + (sulfur carrier)-SH + AH2 + 2 S-adenosyl-L-methionine = 2-methylsulfanyl-N(6)-dimethylallyladenosine(37) in tRNA + (sulfur carrier)-H + 5'-deoxyadenosine + L-methionine + A + S-adenosyl-L-homocysteine + 2 H(+). Its function is as follows. Catalyzes the methylthiolation of N6-(dimethylallyl)adenosine (i(6)A), leading to the formation of 2-methylthio-N6-(dimethylallyl)adenosine (ms(2)i(6)A) at position 37 in tRNAs that read codons beginning with uridine. The polypeptide is tRNA-2-methylthio-N(6)-dimethylallyladenosine synthase (Aquifex aeolicus (strain VF5)).